The primary structure comprises 493 residues: MKISLSPATPEAWSGSVLALGIPENDPQGLVAAMEQRFSLQLSDWLKQKPFSGKPGDCVSLPLLRSDCTALVLVGLGEASSVDRDRLRLAAAAAARAAQGQGGTLGLLLPWSSDTPEEDAAAAAEAVRLALYSDERFRSKPEPSPKPDQLELLGSLPGGLSHGLEAVHPVCAGVELARELVAAPPNSVTPAELARTASHLAHEHGLELTILERSDCEERGMGSFLSVCQGSDMDPKFIHLTYRPNDAASKRLVLVGKGLTFDSGGYNLKVGAAQIDMMKFDMGGSAAVFGAMRAIAELRPAGVEVHMLVASCENMINGSAVHPGDIVTASNGTTIEINNTDAEGRLTLADALVYACKLKPDAIVDLATLTGACVIALGDEIAGLWSGDDSLSSQLEMAAQAAGEGLWRMPLHSPYRKGLKSLLADMKNTGPRPGGSITAALFLKEFVDAGIPWAHIDIAGTVWSDKGRGLDPSGATGYGVRTLVNWITNQANT.

2 residues coordinate Mn(2+): Lys-257 and Asp-262. The active site involves Lys-269. Positions 281, 341, and 343 each coordinate Mn(2+). Residue Arg-345 is part of the active site.

The protein belongs to the peptidase M17 family. It depends on Mn(2+) as a cofactor.

Its subcellular location is the cytoplasm. It carries out the reaction Release of an N-terminal amino acid, Xaa-|-Yaa-, in which Xaa is preferably Leu, but may be other amino acids including Pro although not Arg or Lys, and Yaa may be Pro. Amino acid amides and methyl esters are also readily hydrolyzed, but rates on arylamides are exceedingly low.. The enzyme catalyses Release of an N-terminal amino acid, preferentially leucine, but not glutamic or aspartic acids.. Functionally, presumably involved in the processing and regular turnover of intracellular proteins. Catalyzes the removal of unsubstituted N-terminal amino acids from various peptides. The chain is Probable cytosol aminopeptidase from Synechococcus sp. (strain WH7803).